The sequence spans 410 residues: Putative competence-damage inducible protein (410 aa).

Belongs to the CinA family.

The chain is Putative competence-damage inducible protein from Clostridium kluyveri (strain NBRC 12016).